The chain runs to 446 residues: Immunoglobulin heavy constant gamma 3 (446 aa).

Residues 1 to 98 are CH1; the sequence is ASTKGPSVFP…PSNTKVDKRV (98 aa). Over 1–397 the chain is Extracellular; that stretch reads ASTKGPSVFP…DGELDGLWTT (397 aa). The Ig-like 1 domain maps to 6 to 99; that stretch reads PSVFPLAPCS…SNTKVDKRVE (94 aa). An intrachain disulfide couples Cys27 to Cys83. A hinge region spans residues 99–160; that stretch reads ELKTPLGDTT…DTPPPCPRCP (62 aa). Repeats lie at residues 116–130, 131–145, and 146–160; these read EPKS…PRCP. Residues Thr122, Thr137, and Thr152 are each glycosylated (O-linked (GalNAc...) threonine). The interval 161 to 270 is CH2; that stretch reads APELLGGPSV…PIEKTISKTK (110 aa). Ig-like domains lie at 168–267 and 276–372; these read PSVF…KTIS and PQVY…KSLS. 2 disulfide bridges follow: Cys191-Cys251 and Cys297-Cys355. Asn227 and Asn322 each carry an N-linked (GlcNAc...) asparagine glycan. The interval 271 to 376 is CH3; the sequence is GQPREPQVYT…TQKSLSLSPE (106 aa). A helical membrane pass occupies residues 398 to 418; the sequence is ITIFITLFLLSVCYSATVTFF. The Cytoplasmic segment spans residues 419 to 446; that stretch reads KVKWIFSSVVDLKQTIIPDYRNMIGQGA.

Immunoglobulins are composed of two identical heavy chains and two identical light chains; disulfide-linked. N-linked glycans at Asn-322 are noncore fucosylated and the vast majority are diantennary species with a bisecting GlcNAc. Among them the most dominant glycans are HexNAc5Hex4, HexNAc5Hex5, and HexNAc5Hex5Sia1. In terms of processing, N-linked glycans at Asn-227 are diantennary core fucosylated structures without bisecting GlcNAc (HexNAc4Hex4Fuc1, HexNAc4Hex5Fuc1, and HexNAc4Hex5Fuc1Sia1). Glycosylation on Asn-227 is required for interaction with Fc receptors and ability to activate the complement pathway. Post-translationally, (Microbial infection) Deglycosylation on Asn-227 by S.pyogenes EndoS or Endos2 endoglucosidases prevents interaction between immunoglobulin-gamma (IgG) and Fc receptors, impairing ability to activate the complement pathway. O-linked glycans are non-, mono- and disialylated core 1-type O-glycans.

Its subcellular location is the secreted. The protein resides in the cell membrane. Functionally, constant region of immunoglobulin heavy chains. Immunoglobulins, also known as antibodies, are membrane-bound or secreted glycoproteins produced by B lymphocytes. In the recognition phase of humoral immunity, the membrane-bound immunoglobulins serve as receptors which, upon binding of a specific antigen, trigger the clonal expansion and differentiation of B lymphocytes into immunoglobulins-secreting plasma cells. Secreted immunoglobulins mediate the effector phase of humoral immunity, which results in the elimination of bound antigens. The antigen binding site is formed by the variable domain of one heavy chain, together with that of its associated light chain. Thus, each immunoglobulin has two antigen binding sites with remarkable affinity for a particular antigen. The variable domains are assembled by a process called V-(D)-J rearrangement and can then be subjected to somatic hypermutations which, after exposure to antigen and selection, allow affinity maturation for a particular antigen. In Homo sapiens (Human), this protein is Immunoglobulin heavy constant gamma 3.